The following is a 180-amino-acid chain: MQITVSGLPGSGTTTLSRLLSDYYELELISSGEIFRRMAKERGMSLADFGAMAEKDPSIDLDIDKNQKSIIHTQDDLVLESRLAGHMAKGVPNVLKIWIKAPLLTRVKRIQRREKTISFDEELAKTVEREKSEALRYKNYYGIDITDLSIYDIVIDSEKWNQYQTLDILRVAIDALVGPE.

7-15 (GLPGSGTTT) serves as a coordination point for ATP.

It belongs to the cytidylate kinase family. Type 2 subfamily.

The protein resides in the cytoplasm. It carries out the reaction CMP + ATP = CDP + ADP. The catalysed reaction is dCMP + ATP = dCDP + ADP. This chain is Cytidylate kinase, found in Methanosarcina acetivorans (strain ATCC 35395 / DSM 2834 / JCM 12185 / C2A).